The following is a 2283-amino-acid chain: Serine-rich adhesin for platelets (2283 aa).

The N-terminal stretch at 1-89 (MSKRQKAFHD…VNMLHDQQAF (89 aa)) is a signal peptide. A serine-rich repeat region 1, SRR1 region spans residues 90-230 (AASDAPLTSE…KTSTTSTSTA (141 aa)). Positions 100–111 (LNTQSETVGNQN) are enriched in polar residues. 3 disordered regions span residues 100 to 230 (LNTQ…TSTA), 691 to 721 (NSGN…GTPT), and 751 to 2255 (NSMS…GLLG). The span at 112–128 (STTIEASTSTADSTSVT) shows a compositional bias: low complexity. A compositionally biased stretch (polar residues) spans 129 to 140 (KNSSSVQTSNSD). A compositionally biased stretch (low complexity) spans 149–229 (NVTSTTNSTS…NKTSTTSTST (81 aa)). The interval 231 to 751 (PVKLRTFSRL…TTFKYEVTRN (521 aa)) is non-repeat region (NRR). Composition is skewed to low complexity over residues 752-1323 (SMSD…SDSI), 1330-1894 (SLSA…QSSS), and 1901-2225 (DSMS…SATS). Residues 752–2244 (SMSDSVSTSG…AQSEERLPDT (1493 aa)) are serine-rich repeat region 2, SRR2. An LPXTG sorting signal motif is present at residues 2241 to 2245 (LPDTG). Thr-2244 carries the post-translational modification Pentaglycyl murein peptidoglycan amidated threonine. The propeptide at 2245–2283 (GESIKQNGLLGGIMTLLVGLGLMKRKKKKDENDQDDSQA) is removed by sortase.

The protein belongs to the serine-rich repeat protein (SRRP) family. In terms of processing, proteolytically cleaved by a metalloprotease. Glycosylated. It is probable that most of the Ser residues in SSR1 and SSR2 are O-GlcNAcylated. Sequential glycosylation by sugar transferases are able to generate complex sugar polymorphisms.

It is found in the secreted. The protein localises to the cell wall. Functionally, mediates binding to human platelets, possibly through a receptor-ligand interaction. Probably associated with virulence in endovascular infection. This Staphylococcus aureus protein is Serine-rich adhesin for platelets (sraP).